The primary structure comprises 632 residues: tRNA uridine 5-carboxymethylaminomethyl modification enzyme MnmG (632 aa).

FAD is bound by residues 16–21, valine 128, and serine 183; that span reads GAGHAG. Residues 206-225 are disordered; sequence PRVNGNTIDYSKTEEEPGDK. The span at 216-225 shows a compositional bias: basic and acidic residues; the sequence is SKTEEEPGDK. Position 277–291 (277–291) interacts with NAD(+); sequence GPRYCPSIEDKVVRF. Glutamine 374 contributes to the FAD binding site.

It belongs to the MnmG family. Homodimer. Heterotetramer of two MnmE and two MnmG subunits. FAD serves as cofactor.

The protein resides in the cytoplasm. Functionally, NAD-binding protein involved in the addition of a carboxymethylaminomethyl (cmnm) group at the wobble position (U34) of certain tRNAs, forming tRNA-cmnm(5)s(2)U34. This Lactobacillus acidophilus (strain ATCC 700396 / NCK56 / N2 / NCFM) protein is tRNA uridine 5-carboxymethylaminomethyl modification enzyme MnmG.